Consider the following 62-residue polypeptide: Large ribosomal subunit protein uL29 (62 aa).

This sequence belongs to the universal ribosomal protein uL29 family.

The polypeptide is Large ribosomal subunit protein uL29 (Amoebophilus asiaticus (strain 5a2)).